Consider the following 250-residue polypeptide: MSIKFSFKDEVFSLDKLQLPSRHYHFNDNENYIKLLNIGEGIFPKDKIRTSLSLDNSNLIFTTESATKIYPSKKEYGIQKIDIVLKNNSNLEFINDELILYKDSRYIQFFNLKSDENSTFFYTDILSRGRSFENFDFSNMLIKNSFFCEKSMEYMEKFDVKGAELKDYINRKSSSNFIFAKIYIKTNNNEEFLNRIYLEKFESFTYTKNKKIILGVISSNNMFELKNQIFKIWELYRKELNKSKFNLGKQ.

It belongs to the UreD family. As to quaternary structure, ureD, UreF and UreG form a complex that acts as a GTP-hydrolysis-dependent molecular chaperone, activating the urease apoprotein by helping to assemble the nickel containing metallocenter of UreC. The UreE protein probably delivers the nickel.

It localises to the cytoplasm. In terms of biological role, required for maturation of urease via the functional incorporation of the urease nickel metallocenter. The protein is Urease accessory protein UreD of Aliarcobacter butzleri (strain RM4018) (Arcobacter butzleri).